A 176-amino-acid chain; its full sequence is RNA pyrophosphohydrolase (176 aa).

The 144-residue stretch at G6–K149 folds into the Nudix hydrolase domain. Positions G38–G59 match the Nudix box motif.

The protein belongs to the Nudix hydrolase family. RppH subfamily. The cofactor is a divalent metal cation.

Functionally, accelerates the degradation of transcripts by removing pyrophosphate from the 5'-end of triphosphorylated RNA, leading to a more labile monophosphorylated state that can stimulate subsequent ribonuclease cleavage. This Salmonella paratyphi C (strain RKS4594) protein is RNA pyrophosphohydrolase.